The chain runs to 339 residues: DNA-directed RNA polymerase subunit alpha (339 aa).

An alpha N-terminal domain (alpha-NTD) region spans residues 1–233 (MVREEVAGST…DLFLPFLHAE (233 aa)). Residues 264 to 339 (KKGIPLNCIF…IDLLKNKLSF (76 aa)) are alpha C-terminal domain (alpha-CTD).

It belongs to the RNA polymerase alpha chain family. As to quaternary structure, in plastids the minimal PEP RNA polymerase catalytic core is composed of four subunits: alpha, beta, beta', and beta''. When a (nuclear-encoded) sigma factor is associated with the core the holoenzyme is formed, which can initiate transcription.

The protein resides in the plastid. The protein localises to the chloroplast. The enzyme catalyses RNA(n) + a ribonucleoside 5'-triphosphate = RNA(n+1) + diphosphate. In terms of biological role, DNA-dependent RNA polymerase catalyzes the transcription of DNA into RNA using the four ribonucleoside triphosphates as substrates. This chain is DNA-directed RNA polymerase subunit alpha, found in Aegilops uniaristata (Goatgrass).